A 3750-amino-acid polypeptide reads, in one-letter code: Cubilin homolog (3750 aa).

The N-terminal stretch at 1–28 is a signal peptide; the sequence is MEGAARSRLLLCWTLLAIITDTWPIAEG. Asparagine 51 and asparagine 123 each carry an N-linked (GlcNAc...) asparagine glycan. Residues 154-190 enclose the EGF-like 1 domain; it reads EANSCASGPCENGGTCYNTYTGFRCQCRSAFEGTKCE. 6 disulfides stabilise this stretch: cysteine 158/cysteine 169, cysteine 163/cysteine 178, cysteine 180/cysteine 189, cysteine 196/cysteine 212, cysteine 206/cysteine 221, and cysteine 223/cysteine 232. The EGF-like 2; calcium-binding domain occupies 192 to 233; the sequence is DVNECALYEGTDLGCQNGGQCQNHFGTYSCLCQPGWHGMHCT. The EGF-like 3; calcium-binding domain occupies 282–308; sequence DVDECSDSAAHKPCSTSCINLPGSFTC. Residues 324-352 form the EGF-like 4; calcium-binding domain; sequence DLDECQTNNGGCSLSPKVDCINTYGSYHC. N-linked (GlcNAc...) asparagine glycosylation occurs at asparagine 424. EGF-like domains are found at residues 426-463 and 465-503; these read TTTN…PICE and QPSP…RLCE. 7 disulfide bridges follow: cysteine 430–cysteine 441, cysteine 435–cysteine 451, cysteine 453–cysteine 462, cysteine 469–cysteine 480, cysteine 474–cysteine 491, cysteine 493–cysteine 502, and cysteine 509–cysteine 535. Asparagine 448 carries an N-linked (GlcNAc...) asparagine glycan. 13 consecutive CUB domains span residues 509 to 623, 627 to 738, 744 to 852, 853 to 971, 978 to 1095, 1100 to 1212, 1216 to 1331, 1332 to 1434, 1439 to 1550, 1554 to 1670, 1671 to 1788, 1792 to 1902, and 1903 to 2001; these read CNGM…WNSM, CGGR…YSVE, CGGV…YRMA, CDYK…YRAL, CGGV…YTFE, CGGH…WRIF, CGGS…YKAN, CIRN…QLDY, CMEE…YRTV, CGGK…FHES, CGQT…YMTM, CGSI…YNYE, and HHNE…WNRL. N-linked (GlcNAc...) asparagine glycans are attached at residues asparagine 542 and asparagine 548. Residues cysteine 562 and cysteine 584 are joined by a disulfide bond. Asparagine 609 is a glycosylation site (N-linked (GlcNAc...) asparagine). Intrachain disulfides connect cysteine 627–cysteine 654, cysteine 681–cysteine 701, cysteine 744–cysteine 770, cysteine 853–cysteine 879, cysteine 913–cysteine 933, and cysteine 978–cysteine 1004. N-linked (GlcNAc...) asparagine glycosylation is present at asparagine 871. Ca(2+) contacts are provided by glutamate 1026, aspartate 1034, and aspartate 1080. Cysteines 1031 and 1058 form a disulfide. Cysteine 1100 and cysteine 1126 are joined by a disulfide. Asparagine 1119 carries an N-linked (GlcNAc...) asparagine glycan. Glutamate 1148 provides a ligand contact to Ca(2+). N-linked (GlcNAc...) asparagine glycosylation is present at asparagine 1152. Cysteines 1153 and 1175 form a disulfide. Residues aspartate 1156 and aspartate 1197 each coordinate Ca(2+). A disulfide bond links cysteine 1216 and cysteine 1242. Ca(2+)-binding residues include glutamate 1264, aspartate 1272, and aspartate 1316. A disulfide bridge links cysteine 1269 with cysteine 1292. Residues cysteine 1332 and cysteine 1360 are joined by a disulfide bond. Asparagine 1335, asparagine 1359, asparagine 1413, and asparagine 1424 each carry an N-linked (GlcNAc...) asparagine glycan. Cysteine 1439 and cysteine 1465 are oxidised to a cystine. Residue asparagine 1491 is glycosylated (N-linked (GlcNAc...) asparagine). Intrachain disulfides connect cysteine 1492–cysteine 1513, cysteine 1554–cysteine 1580, cysteine 1607–cysteine 1631, cysteine 1671–cysteine 1697, cysteine 1733–cysteine 1755, cysteine 1792–cysteine 1818, and cysteine 1845–cysteine 1866. An N-linked (GlcNAc...) asparagine glycan is attached at asparagine 1694. Asparagine 1908 and asparagine 2009 each carry an N-linked (GlcNAc...) asparagine glycan. 2 disulfide bridges follow: cysteine 2019–cysteine 2048 and cysteine 2077–cysteine 2100. CUB domains are found at residues 2019–2139, 2140–2256, 2262–2383, 2385–2512, and 2516–2646; these read CGNQ…VRTA, CGSE…FRFE, DSGR…LSVA, CGGS…YTSL, and CGET…MNEV. Residues asparagine 2092, asparagine 2128, asparagine 2152, and asparagine 2231 are each glycosylated (N-linked (GlcNAc...) asparagine). A disulfide bridge connects residues cysteine 2140 and cysteine 2167. Cysteines 2324 and 2346 form a disulfide. N-linked (GlcNAc...) asparagine glycosylation is present at asparagine 2377. Cysteine 2385 and cysteine 2416 form a disulfide bridge. Residue asparagine 2442 is glycosylated (N-linked (GlcNAc...) asparagine). 2 cysteine pairs are disulfide-bonded: cysteine 2445–cysteine 2474 and cysteine 2516–cysteine 2542. Residues asparagine 2655, asparagine 2671, asparagine 2682, and asparagine 2772 are each glycosylated (N-linked (GlcNAc...) asparagine). 2 disulfide bridges follow: cysteine 2761-cysteine 2790 and cysteine 2837-cysteine 2859. 8 CUB domains span residues 2761–2895, 2898–3010, 3011–3128, 3130–3246, 3249–3364, 3368–3512, 3522–3615, and 3623–3736; these read CGGV…IKYG, CGGK…FERN, CGGL…YTSR, CGGI…VRVM, CDEK…INAI, CGSS…VALN, LQGR…YLAS, and CGGQ…FAGV. Residues asparagine 2885 and asparagine 2889 are each glycosylated (N-linked (GlcNAc...) asparagine). Disulfide bonds link cysteine 2898/cysteine 2921 and cysteine 2949/cysteine 2973. N-linked (GlcNAc...) asparagine glycans are attached at residues asparagine 2960, asparagine 2965, and asparagine 2982. An intrachain disulfide couples cysteine 3011 to cysteine 3039. N-linked (GlcNAc...) asparagine glycans are attached at residues asparagine 3040 and asparagine 3074. 2 disulfide bridges follow: cysteine 3070–cysteine 3092 and cysteine 3130–cysteine 3157. Asparagine 3160 carries N-linked (GlcNAc...) asparagine glycosylation. Cystine bridges form between cysteine 3184–cysteine 3207, cysteine 3249–cysteine 3278, cysteine 3305–cysteine 3327, and cysteine 3368–cysteine 3402. Asparagine 3256 is a glycosylation site (N-linked (GlcNAc...) asparagine). Asparagine 3427 is a glycosylation site (N-linked (GlcNAc...) asparagine). Cysteine 3430 and cysteine 3475 are joined by a disulfide. Asparagine 3543, asparagine 3572, and asparagine 3645 each carry an N-linked (GlcNAc...) asparagine glycan. 3 cysteine pairs are disulfide-bonded: cysteine 3560-cysteine 3579, cysteine 3623-cysteine 3649, and cysteine 3676-cysteine 3699.

Specifically expressed in nephrocytes.

Its subcellular location is the cell membrane. Its function is as follows. Required in the nephrocyte for normal uptake of proteins and elimination of toxins, and for maintenance of endocytic trafficking structures. May function together with Amnionless. The polypeptide is Cubilin homolog (Drosophila melanogaster (Fruit fly)).